A 102-amino-acid chain; its full sequence is Large ribosomal subunit protein bL21 (102 aa).

The protein belongs to the bacterial ribosomal protein bL21 family. As to quaternary structure, part of the 50S ribosomal subunit. Contacts protein L20.

Functionally, this protein binds to 23S rRNA in the presence of protein L20. The chain is Large ribosomal subunit protein bL21 from Ligilactobacillus salivarius (strain UCC118) (Lactobacillus salivarius).